We begin with the raw amino-acid sequence, 450 residues long: Tripartite motif-containing protein 64C (450 aa).

Residues 15 to 56 (CCICVNYFIDPVTTDCVHSFCRPCLCLCSEEGRAPMRCPLCR) form an RING-type zinc finger. The segment at 87-128 (SSDNICVLHEETKELFCEADKRLLCGPCSESPEHMAHSHSPI) adopts a B box-type zinc-finger fold. Zn(2+) is bound by residues cysteine 92, histidine 95, cysteine 114, and histidine 120. Residues 191-218 (DEEEQRHLQALEREAKELFQQLQDSQVR) are a coiled coil. The region spanning 269 to 450 (ELTSWCITGV…LRPFFCFGCT (182 aa)) is the B30.2/SPRY domain.

The protein belongs to the TRIM/RBCC family.

The chain is Tripartite motif-containing protein 64C (TRIM64C) from Homo sapiens (Human).